The sequence spans 147 residues: Transthyretin (147 aa).

A signal peptide spans methionine 1–alanine 20. Residue cysteine 30 is modified to Sulfocysteine. Lysine 35 provides a ligand contact to L-thyroxine. Residue glutamate 62 is modified to 4-carboxyglutamate. Position 74 (glutamate 74) interacts with L-thyroxine. Residue asparagine 118 is glycosylated (N-linked (GlcNAc...) asparagine). Serine 137 is a binding site for L-thyroxine.

The protein belongs to the transthyretin family. As to quaternary structure, homotetramer. Dimer of dimers. In the homotetramer, subunits assemble around a central channel that can accommodate two ligand molecules. Interacts with RBP4. In terms of processing, sulfonation of the reactive cysteine Cys-30 enhances the stability of the native conformation of TTR, avoiding misassembly of the protein leading to amyloid formation. In terms of tissue distribution, detected in serum (at protein level). Detected in liver.

It is found in the secreted. Its function is as follows. Thyroid hormone-binding protein. Probably transports thyroxine from the bloodstream to the brain. The polypeptide is Transthyretin (TTR) (Sorex araneus (Eurasian common shrew)).